A 183-amino-acid chain; its full sequence is Peptidoglycan recognition protein 1 (183 aa).

A signal peptide spans 1-17 (MLFAWAPFPALLGLADS). Intrachain disulfides connect cysteine 18-cysteine 142, cysteine 34-cysteine 79, and cysteine 55-cysteine 61. Positions 40–168 (KPVRYVVISH…RDVQSTLSPG (129 aa)) constitute an N-acetylmuramoyl-L-alanine amidase domain.

The protein belongs to the N-acetylmuramoyl-L-alanine amidase 2 family. As to expression, expressed in all regions of the brain.

It is found in the secreted. It localises to the cytoplasmic granule. Functionally, innate immunity protein that plays several important functions in antimicrobial and antitumor defense systems. Acts as a pattern receptor that binds to murein peptidoglycans (PGN) of Gram-positive bacteria and thus provides bactericidal activity. Forms an equimolar complex with heat shock protein HSPA1A and induces programmed cell death through apoptosis and necroptosis in tumor cell lines by activating the TNFR1 receptor on the target cell membrane. In addition, acts in complex with the Ca(2+)-binding protein S100A4 as a chemoattractant able to induce lymphocyte movement. Mechanistically, this complex acts as a ligand of the chemotactic receptors CCR5 and CXCR3 which are present on the cells of the immune system. Promotes also the activation of lymphocytes that become able to kill virus-infected cells as well as tumor cells by modulating the spectrum of their target-cell specificity. Induction of cytotoxicity on monocyte surface requires interaction with TREM1 receptor. This chain is Peptidoglycan recognition protein 1 (Pglyrp1), found in Rattus norvegicus (Rat).